A 209-amino-acid polypeptide reads, in one-letter code: MIGLVGRKVGMTRIFTEEGVSIPVTVVEVEVNRVSQVKTVETDGYNAIQVTCGSKKANRVSKPEAGHFAKAGVEAGRGLWEFRLENGEEFTVGAELSVEIFNEIKKVDVTGTSKGKGFQGAIKRWNFATQDMTHGNSLSHRAPGSIGQCQTPGRVFKGKKMAGHMGAERCTTQNLEIVRVDAERNLLLIKGAVPGSTGGNVIVKPAVKA.

The residue at position 150 (Gln-150) is an N5-methylglutamine.

This sequence belongs to the universal ribosomal protein uL3 family. Part of the 50S ribosomal subunit. Forms a cluster with proteins L14 and L19. In terms of processing, methylated by PrmB.

Functionally, one of the primary rRNA binding proteins, it binds directly near the 3'-end of the 23S rRNA, where it nucleates assembly of the 50S subunit. In Aliivibrio salmonicida (strain LFI1238) (Vibrio salmonicida (strain LFI1238)), this protein is Large ribosomal subunit protein uL3.